A 197-amino-acid polypeptide reads, in one-letter code: MKTTQFILASASPARRRLLQTVGIEPIVSPSDFDESQIEETEPGKLVQILAQCKAETVAPQFPSGLVMGCDSVLAIDGKIHGKPIDADEAIARWQLMRGQVGDLYTGHVLIDNLQNRTLVKCQVTRVYFANISDRTIQAYVATGEPLKCAGAFALEGFGSLFIEKIAGCHSNVIGLSLPLLRQMLEELNYDVTDFWK.

The active-site Proton acceptor is D71.

It belongs to the Maf family. The cofactor is a divalent metal cation.

It is found in the cytoplasm. The catalysed reaction is a ribonucleoside 5'-triphosphate + H2O = a ribonucleoside 5'-phosphate + diphosphate + H(+). It carries out the reaction a 2'-deoxyribonucleoside 5'-triphosphate + H2O = a 2'-deoxyribonucleoside 5'-phosphate + diphosphate + H(+). Nucleoside triphosphate pyrophosphatase. May have a dual role in cell division arrest and in preventing the incorporation of modified nucleotides into cellular nucleic acids. The polypeptide is Nucleoside triphosphate pyrophosphatase (Trichormus variabilis (strain ATCC 29413 / PCC 7937) (Anabaena variabilis)).